The chain runs to 597 residues: Nucleolar protein 58 (597 aa).

The Nop domain maps to 285-410 (IAPNMTELVG…LENNLRQLEG (126 aa)). The segment at 452-597 (AEAPKKPLIQ…KKKKKKSSKE (146 aa)) is disordered. Positions 482–499 (KSKKDKKEKKEKKDKKAK) are enriched in basic residues. Residues 532–551 (IKEDGTLEILSKKDFKGKDA) are compositionally biased toward basic and acidic residues. Residues 552-561 (EAEEEAEEEE) show a composition bias toward acidic residues. The segment covering 588-597 (KKKKKKSSKE) has biased composition (basic residues).

This sequence belongs to the NOP5/NOP56 family.

Its subcellular location is the nucleus. It is found in the nucleolus. In terms of biological role, required for pre-18S rRNA processing. May bind microtubules. The sequence is that of Nucleolar protein 58 (nop-58) from Neurospora crassa (strain ATCC 24698 / 74-OR23-1A / CBS 708.71 / DSM 1257 / FGSC 987).